Consider the following 228-residue polypeptide: Homeobox protein Hox-B6a (228 aa).

The Antp-type hexapeptide signature appears at 132–137; sequence VYPWMQ. The segment at residues 150-209 is a DNA-binding region (homeobox); the sequence is GRRGRQTYTRYQTLELEKEFHFNRYLTRRRRIEIAHALCLTERQIKIWFQNRRMKWKKEN.

Belongs to the Antp homeobox family.

It localises to the nucleus. Sequence-specific transcription factor which is part of a developmental regulatory system that provides cells with specific positional identities on the anterior-posterior axis. This Danio rerio (Zebrafish) protein is Homeobox protein Hox-B6a (hoxb6a).